The following is a 157-amino-acid chain: Small ribosomal subunit protein uS7 (157 aa).

It belongs to the universal ribosomal protein uS7 family. Part of the 30S ribosomal subunit. Contacts proteins S9 and S11.

Its function is as follows. One of the primary rRNA binding proteins, it binds directly to 16S rRNA where it nucleates assembly of the head domain of the 30S subunit. Is located at the subunit interface close to the decoding center, probably blocks exit of the E-site tRNA. The chain is Small ribosomal subunit protein uS7 from Chlamydia caviae (strain ATCC VR-813 / DSM 19441 / 03DC25 / GPIC) (Chlamydophila caviae).